A 433-amino-acid polypeptide reads, in one-letter code: DNA polymerase processivity factor (433 aa).

The disordered stretch occupies residues 274–433 (RGDPFDKNYV…VPNTKKQKCG (160 aa)). 3 stretches are compositionally biased toward gly residues: residues 289-298 (SRGGGGGGGS), 325-336 (GLGGLGGGGGGG), and 344-359 (GGGGSGTRKMSSGGGG). The segment covering 360–376 (GDHDHGLSSKEKYEQHK) has biased composition (basic and acidic residues). A compositionally biased stretch (gly residues) spans 385-398 (GGSGGGGGGGGGGL). Residue Lys410 forms a Glycyl lysine isopeptide (Lys-Gly) (interchain with G-Cter in host SUMO1) linkage. Phosphoserine occurs at positions 413, 415, and 418.

This sequence belongs to the herpesviridae polymerase accessory protein family. As to quaternary structure, forms homodimers. Interacts with host SMARCB1. Interacts with host NCL/nucleolin; this interaction is important for the organization of proteins within viral replication compartments. Interacts with UL112/UL113; this interaction is necessary for efficient viral DNA replication. Interacts with UL84. Interacts with the uracil DNA glycosylase UL114. Interacts with the DNA polymerase catalytic subunit UL54. Interacts with host IRF3. Interacts with host RELA. Phosphorylated by UL97 on serine residues, phosphorylation seems important for UL44 nuclear entry but does not directly affect its role in replication. In terms of processing, sumoylated. Sumoylation on Lys-410 increases viral DNA replication.

It is found in the virion. Its subcellular location is the host nucleus. Accessory subunit of the DNA polymerase that plays an essential role in viral DNA replication and acts by increasing the processivity of polymerization. Forms dimers that binds to double-stranded DNA and UL54 specifically to stimulates long chain DNA synthesis efficiently. Plays an important role in maintaining the structure of viral replication compartments by interacting with host nucleolin/NUC. In addition, suppresses innate immune responses through effects on host IRF3 and NF-kappa-B. Mechanistically, interfere with the binding of IRF3 and the p65 NF-kappa-B subunit to the promoters of antiviral genes, thereby inhibiting the expression of these genes. The sequence is that of DNA polymerase processivity factor (UL44) from Homo sapiens (Human).